The chain runs to 125 residues: Allatostatin (125 aa).

An N-terminal signal peptide occupies residues 1 to 26; it reads MKTSAYNVYLGVVAAMLALLFVTINA. Positions 27–106 are excised as a propeptide; the sequence is APMEADDETA…SRLARQWRAD (80 aa). Q109 is subject to Pyrrolidone carboxylic acid.

Belongs to the allatostatin family.

It is found in the secreted. Strongly inhibits juvenile hormone biosynthesis in vitro by the corpora allata from fifth-stadium larvae and adult females. This chain is Allatostatin, found in Spodoptera frugiperda (Fall armyworm).